The sequence spans 253 residues: Ubiquinone biosynthesis O-methyltransferase (253 aa).

S-adenosyl-L-methionine is bound by residues Arg47, Gly78, Asp99, and Met141.

This sequence belongs to the methyltransferase superfamily. UbiG/COQ3 family.

The enzyme catalyses a 3-demethylubiquinol + S-adenosyl-L-methionine = a ubiquinol + S-adenosyl-L-homocysteine + H(+). The catalysed reaction is a 3-(all-trans-polyprenyl)benzene-1,2-diol + S-adenosyl-L-methionine = a 2-methoxy-6-(all-trans-polyprenyl)phenol + S-adenosyl-L-homocysteine + H(+). The protein operates within cofactor biosynthesis; ubiquinone biosynthesis. Functionally, O-methyltransferase that catalyzes the 2 O-methylation steps in the ubiquinone biosynthetic pathway. The chain is Ubiquinone biosynthesis O-methyltransferase from Rhodopseudomonas palustris (strain BisA53).